A 516-amino-acid polypeptide reads, in one-letter code: Acetylcholine receptor subunit alpha-like (516 aa).

Positions 1–21 are cleaved as a signal peptide; that stretch reads MRSVTKYYLHGVVLFATGCAG. Residues 22–243 lie on the Extracellular side of the membrane; sequence NPDAKRLYDD…ITMRRKTLFY (222 aa). 2 N-linked (GlcNAc...) asparagine glycosylation sites follow: asparagine 45 and asparagine 132. Disulfide bonds link cysteine 149/cysteine 163 and cysteine 222/cysteine 223. The N-linked (GlcNAc...) asparagine glycan is linked to asparagine 233. The next 3 membrane-spanning stretches (helical) occupy residues 244-264, 274-294, and 306-326; these read TVNL…VFYL, LSIS…EIIP, and FVLF…VVLN. Residues 327-465 lie on the Cytoplasmic side of the membrane; it reads VHFRSPQTHT…WKYVAMVLDR (139 aa). Residues 466–486 traverse the membrane as a helical segment; that stretch reads PFLWIFTLAVVVGSAGIILQA.

The protein belongs to the ligand-gated ion channel (TC 1.A.9) family. Acetylcholine receptor (TC 1.A.9.1) subfamily.

Its subcellular location is the postsynaptic cell membrane. The protein localises to the cell membrane. After binding acetylcholine, the AChR responds by an extensive change in conformation that affects all subunits and leads to opening of an ion-conducting channel across the plasma membrane. The protein is Acetylcholine receptor subunit alpha-like (ARA1) of Manduca sexta (Tobacco hawkmoth).